A 315-amino-acid chain; its full sequence is Serine/threonine-protein phosphatase PP2A catalytic subunit 3 (315 aa).

Positions 62, 64, 90, and 122 each coordinate Mn(2+). The active-site Proton donor is His-123. Residues His-172 and His-247 each contribute to the Mn(2+) site. Positions 294 to 315 (QFEPAPRENEPHTTRRVPDYFL) are disordered. Basic and acidic residues predominate over residues 298 to 315 (APRENEPHTTRRVPDYFL). A Leucine methyl ester modification is found at Leu-315.

The protein belongs to the PPP phosphatase family. PP-2A subfamily. It depends on Mn(2+) as a cofactor. Post-translationally, reversibly methyl esterified on Leu-315 by leucine carboxyl methyltransferase 1 (PPM1) and protein phosphatase methylesterase 1 (PPE1). Carboxyl methylation influences the affinity of the catalytic subunit for the different regulatory subunits, thereby modulating the PP2A holoenzyme's substrate specificity, enzyme activity and cellular localization.

It catalyses the reaction O-phospho-L-seryl-[protein] + H2O = L-seryl-[protein] + phosphate. The catalysed reaction is O-phospho-L-threonyl-[protein] + H2O = L-threonyl-[protein] + phosphate. The chain is Serine/threonine-protein phosphatase PP2A catalytic subunit 3 (Ppn3) from Paramecium tetraurelia.